The following is a 387-amino-acid chain: Succinate--CoA ligase [ADP-forming] subunit beta (387 aa).

In terms of domain architecture, ATP-grasp spans 9 to 236 (KELFAKHNVP…RDATDPLELK (228 aa)). ATP-binding positions include K45, 52–54 (GRG), S94, and E99. Mg(2+)-binding residues include N191 and D205. Residues N256 and 318–320 (GIT) contribute to the substrate site.

It belongs to the succinate/malate CoA ligase beta subunit family. In terms of assembly, heterotetramer of two alpha and two beta subunits. Mg(2+) is required as a cofactor.

It carries out the reaction succinate + ATP + CoA = succinyl-CoA + ADP + phosphate. The catalysed reaction is GTP + succinate + CoA = succinyl-CoA + GDP + phosphate. Its pathway is carbohydrate metabolism; tricarboxylic acid cycle; succinate from succinyl-CoA (ligase route): step 1/1. In terms of biological role, succinyl-CoA synthetase functions in the citric acid cycle (TCA), coupling the hydrolysis of succinyl-CoA to the synthesis of either ATP or GTP and thus represents the only step of substrate-level phosphorylation in the TCA. The beta subunit provides nucleotide specificity of the enzyme and binds the substrate succinate, while the binding sites for coenzyme A and phosphate are found in the alpha subunit. This chain is Succinate--CoA ligase [ADP-forming] subunit beta, found in Mycobacterium sp. (strain JLS).